A 333-amino-acid polypeptide reads, in one-letter code: Casein kinase II subunit alpha-3 (333 aa).

The Protein kinase domain occupies 34–319 (YEVVRKVGRG…AREAMDHPYF (286 aa)). ATP-binding positions include 40-48 (VGRGKYSEV) and K63. Residue D151 is the Proton acceptor of the active site.

It belongs to the protein kinase superfamily. Ser/Thr protein kinase family. CK2 subfamily. As to quaternary structure, heterotetramer of two catalytic alpha subunits and two regulatory beta subunits.

It localises to the nucleus. It is found in the nucleolus. Its subcellular location is the cytoplasm. It catalyses the reaction L-seryl-[protein] + ATP = O-phospho-L-seryl-[protein] + ADP + H(+). It carries out the reaction L-threonyl-[protein] + ATP = O-phospho-L-threonyl-[protein] + ADP + H(+). Functionally, casein kinases are operationally defined by their preferential utilization of acidic proteins such as caseins as substrates. The alpha chain contains the catalytic site. The tetrameric holoenzyme CK2 is composed of two alpha and two beta subunits. Acts as a circadian clock component that maintains the correct period length through phosphorylation of CCA1. This Arabidopsis thaliana (Mouse-ear cress) protein is Casein kinase II subunit alpha-3.